The following is a 143-amino-acid chain: Transcription antitermination protein NusB (143 aa).

The protein belongs to the NusB family.

Its function is as follows. Involved in transcription antitermination. Required for transcription of ribosomal RNA (rRNA) genes. Binds specifically to the boxA antiterminator sequence of the ribosomal RNA (rrn) operons. This chain is Transcription antitermination protein NusB, found in Methylacidiphilum infernorum (isolate V4) (Methylokorus infernorum (strain V4)).